The primary structure comprises 54 residues: MSKKSTPMTKDAASRIQSSAAKSGGDVSSGSFASRAQSAAAINANNTSNSTGKK.

Positions 1-54 (MSKKSTPMTKDAASRIQSSAAKSGGDVSSGSFASRAQSAAAINANNTSNSTGKK) are disordered. Over residues 28–54 (SSGSFASRAQSAAAINANNTSNSTGKK) the composition is skewed to low complexity.

This is an uncharacterized protein from Dictyostelium discoideum (Social amoeba).